The primary structure comprises 371 residues: tRNA/tmRNA (uracil-C(5))-methyltransferase (371 aa).

Gln-194, Tyr-223, Asn-228, Glu-244, and Asp-304 together coordinate S-adenosyl-L-methionine. The Nucleophile role is filled by Cys-329. Residue Glu-363 is the Proton acceptor of the active site.

This sequence belongs to the class I-like SAM-binding methyltransferase superfamily. RNA M5U methyltransferase family. TrmA subfamily.

It catalyses the reaction uridine(54) in tRNA + S-adenosyl-L-methionine = 5-methyluridine(54) in tRNA + S-adenosyl-L-homocysteine + H(+). It carries out the reaction uridine(341) in tmRNA + S-adenosyl-L-methionine = 5-methyluridine(341) in tmRNA + S-adenosyl-L-homocysteine + H(+). Dual-specificity methyltransferase that catalyzes the formation of 5-methyluridine at position 54 (m5U54) in all tRNAs, and that of position 341 (m5U341) in tmRNA (transfer-mRNA). This is tRNA/tmRNA (uracil-C(5))-methyltransferase from Sulfurovum sp. (strain NBC37-1).